The chain runs to 384 residues: Monomethylxanthine methyltransferase 2 (384 aa).

8 residues coordinate S-adenosyl-L-homocysteine: Tyr18, Cys61, Asn66, Asp100, Leu101, Ser139, Phe140, and Cys156. Residues Tyr157, His160, and Trp161 each contribute to the theobromine site. Mg(2+) contacts are provided by Asn178, Phe262, and Asn263. Position 368 (Tyr368) interacts with theobromine.

This sequence belongs to the methyltransferase superfamily. Type-7 methyltransferase family. Mg(2+) is required as a cofactor. As to expression, expressed, at low levels, in young leaves, floral buds and immature fruits (grains), but not in old leaves and mature fruits. Highly expressed in developing endosperm and flower buds. Detected in young leaves.

The catalysed reaction is 7-methylxanthine + S-adenosyl-L-methionine = theobromine + S-adenosyl-L-homocysteine + H(+). It participates in alkaloid biosynthesis. Functionally, involved in the biosynthesis of caffeine. Catalyzes the conversion of 7-methylxanthine (7mX) to theobromine and with a lower activity of paraxanthine to caffeine. Does not have 1-N-methylation activity. The protein is Monomethylxanthine methyltransferase 2 of Coffea arabica (Arabian coffee).